Reading from the N-terminus, the 195-residue chain is Shikimate kinase (195 aa).

31 to 36 contributes to the ATP binding site; sequence GAGKSC. Position 35 (S35) interacts with Mg(2+). 3 residues coordinate substrate: D53, R77, and G99. Position 137 (R137) interacts with ATP. Residue R156 coordinates substrate.

It belongs to the shikimate kinase family. As to quaternary structure, monomer. The cofactor is Mg(2+).

Its subcellular location is the cytoplasm. It carries out the reaction shikimate + ATP = 3-phosphoshikimate + ADP + H(+). It functions in the pathway metabolic intermediate biosynthesis; chorismate biosynthesis; chorismate from D-erythrose 4-phosphate and phosphoenolpyruvate: step 5/7. Functionally, catalyzes the specific phosphorylation of the 3-hydroxyl group of shikimic acid using ATP as a cosubstrate. The sequence is that of Shikimate kinase from Paramagnetospirillum magneticum (strain ATCC 700264 / AMB-1) (Magnetospirillum magneticum).